The primary structure comprises 201 residues: Small ribosomal subunit protein uS4 (201 aa).

Residues 92–155 form the S4 RNA-binding domain; that stretch reads RRLDAVVYAL…QKLDIIQESV (64 aa).

This sequence belongs to the universal ribosomal protein uS4 family. Part of the 30S ribosomal subunit. Contacts protein S5. The interaction surface between S4 and S5 is involved in control of translational fidelity.

One of the primary rRNA binding proteins, it binds directly to 16S rRNA where it nucleates assembly of the body of the 30S subunit. Functionally, with S5 and S12 plays an important role in translational accuracy. The protein is Small ribosomal subunit protein uS4 of Staphylococcus carnosus (strain TM300).